A 181-amino-acid chain; its full sequence is GTP cyclohydrolase 1 2 (181 aa).

It belongs to the GTP cyclohydrolase I family. Homomer.

It carries out the reaction GTP + H2O = 7,8-dihydroneopterin 3'-triphosphate + formate + H(+). It functions in the pathway cofactor biosynthesis; 7,8-dihydroneopterin triphosphate biosynthesis; 7,8-dihydroneopterin triphosphate from GTP: step 1/1. This is GTP cyclohydrolase 1 2 (folE2) from Pseudomonas aeruginosa (strain ATCC 15692 / DSM 22644 / CIP 104116 / JCM 14847 / LMG 12228 / 1C / PRS 101 / PAO1).